Consider the following 295-residue polypeptide: Ribosomal protein L11 methyltransferase (295 aa).

Thr145, Gly166, Asp188, and Asn230 together coordinate S-adenosyl-L-methionine.

Belongs to the methyltransferase superfamily. PrmA family.

It is found in the cytoplasm. The enzyme catalyses L-lysyl-[protein] + 3 S-adenosyl-L-methionine = N(6),N(6),N(6)-trimethyl-L-lysyl-[protein] + 3 S-adenosyl-L-homocysteine + 3 H(+). In terms of biological role, methylates ribosomal protein L11. The protein is Ribosomal protein L11 methyltransferase of Haemophilus influenzae (strain PittEE).